The sequence spans 437 residues: GTPase Obg (437 aa).

Positions 2 to 160 constitute an Obg domain; it reads SMFLDTAKIS…RQLELELKIL (159 aa). The region spanning 161 to 338 is the OBG-type G domain; sequence ADVGLVGFPS…LLEATAELLA (178 aa). GTP contacts are provided by residues 167 to 174, 192 to 196, 214 to 217, 284 to 287, and 319 to 321; these read GFPSVGKS, FTTIV, DLPG, NKMD, and SSL. Residues Ser-174 and Thr-194 each contribute to the Mg(2+) site. The region spanning 359–437 is the OCT domain; sequence GFAETEKNFE…IGKFEFEFVD (79 aa).

This sequence belongs to the TRAFAC class OBG-HflX-like GTPase superfamily. OBG GTPase family. Monomer. The cofactor is Mg(2+).

The protein resides in the cytoplasm. Functionally, an essential GTPase which binds GTP, GDP and possibly (p)ppGpp with moderate affinity, with high nucleotide exchange rates and a fairly low GTP hydrolysis rate. Plays a role in control of the cell cycle, stress response, ribosome biogenesis and in those bacteria that undergo differentiation, in morphogenesis control. This Streptococcus pyogenes serotype M49 (strain NZ131) protein is GTPase Obg.